The following is a 126-amino-acid chain: S-adenosylmethionine decarboxylase proenzyme (126 aa).

Residue Ser63 is the Schiff-base intermediate with substrate; via pyruvic acid of the active site. Position 63 is a pyruvic acid (Ser); by autocatalysis (Ser63). The active-site Proton acceptor; for processing activity is the His68. The active-site Proton donor; for catalytic activity is the Cys83.

It belongs to the prokaryotic AdoMetDC family. Type 1 subfamily. Heterotetramer of two alpha and two beta chains arranged as a dimer of alpha/beta heterodimers. Pyruvate is required as a cofactor. Is synthesized initially as an inactive proenzyme. Formation of the active enzyme involves a self-maturation process in which the active site pyruvoyl group is generated from an internal serine residue via an autocatalytic post-translational modification. Two non-identical subunits are generated from the proenzyme in this reaction, and the pyruvate is formed at the N-terminus of the alpha chain, which is derived from the carboxyl end of the proenzyme. The post-translation cleavage follows an unusual pathway, termed non-hydrolytic serinolysis, in which the side chain hydroxyl group of the serine supplies its oxygen atom to form the C-terminus of the beta chain, while the remainder of the serine residue undergoes an oxidative deamination to produce ammonia and the pyruvoyl group blocking the N-terminus of the alpha chain.

It carries out the reaction S-adenosyl-L-methionine + H(+) = S-adenosyl 3-(methylsulfanyl)propylamine + CO2. The protein operates within amine and polyamine biosynthesis; S-adenosylmethioninamine biosynthesis; S-adenosylmethioninamine from S-adenosyl-L-methionine: step 1/1. Catalyzes the decarboxylation of S-adenosylmethionine to S-adenosylmethioninamine (dcAdoMet), the propylamine donor required for the synthesis of the polyamines spermine and spermidine from the diamine putrescine. In Pelotomaculum thermopropionicum (strain DSM 13744 / JCM 10971 / SI), this protein is S-adenosylmethionine decarboxylase proenzyme.